The sequence spans 246 residues: MTDNTTAPLYSLRGLQLIGWRDMQHALNYLFADGQMKQGTLVAINAEKMLTAEDDPEVRALIDAAEFKYADGISVVRSVRKKFPQAQVSRVAGADLWEELMARAGKEGTPVFLVGGKPEVLAQTEAKLRAQWNVNIVGSQDGYFKPEQRQALFERIHASGAKIVTVAMGSPKQEILMRDCRVIHPQALYMGVGGTYDVFTGHVKRAPKMWQTLGLEWLYRLLSQPSRITRQLRLLRYLRWHYTGNL.

This sequence belongs to the glycosyltransferase 26 family.

The enzyme catalyses UDP-N-acetyl-alpha-D-mannosaminouronate + N-acetyl-alpha-D-glucosaminyl-di-trans,octa-cis-undecaprenyl diphosphate = beta-D-ManNAcA-(1-&gt;4)-alpha-D-GlcNAc-di-trans,octa-cis-undecaprenyl diphosphate + UDP + H(+). Its pathway is bacterial outer membrane biogenesis; enterobacterial common antigen biosynthesis. Functionally, catalyzes the synthesis of Und-PP-GlcNAc-ManNAcA (Lipid II), the second lipid-linked intermediate involved in enterobacterial common antigen (ECA) synthesis. The chain is UDP-N-acetyl-D-mannosaminuronic acid transferase from Citrobacter koseri (strain ATCC BAA-895 / CDC 4225-83 / SGSC4696).